Here is a 195-residue protein sequence, read N- to C-terminus: Glycine-rich protein A3 (195 aa).

Disordered stretches follow at residues 23–103 (AGGG…GVAG) and 159–182 (VMES…GSNL). Gly residues predominate over residues 47–77 (PAGGGYPPQGYPPAGGGYPPQGYPPAGGGYP). The span at 82-94 (PPAGHHSGSSAPH) shows a compositional bias: low complexity. The span at 163–175 (LSRESTGRARSTD) shows a compositional bias: basic and acidic residues.

The polypeptide is Glycine-rich protein A3 (Daucus carota (Wild carrot)).